An 89-amino-acid polypeptide reads, in one-letter code: DNA/RNA-binding protein Alba 2 (89 aa).

Residue lysine 12 is modified to N6-acetyllysine. Zn(2+) is bound by residues lysine 14, aspartate 18, and aspartate 22.

It belongs to the histone-like Alba family. Forms homodimers and homotetramers. Homodimer at pH below 6.0. Forms homotetramers and higher order homooligomers at near the growth temperature of 80 degrees Celsius and pH 7.0. Interacts with Alba 1; heterodimers lack cooperative DNA-binding behavior and result in more compact chromatin structures compared to Alba 1 homodimers. Post-translationally, acetylated. Acetylation at Lys-12 decreases DNA-binding affinity.

The protein resides in the cytoplasm. It localises to the chromosome. Its function is as follows. Binds single-stranded DNA, RNA and double-stranded DNA. Involved in DNA compaction. The polypeptide is DNA/RNA-binding protein Alba 2 (Saccharolobus solfataricus (strain ATCC 35092 / DSM 1617 / JCM 11322 / P2) (Sulfolobus solfataricus)).